The sequence spans 306 residues: Aspartate carbamoyltransferase catalytic subunit (306 aa).

The carbamoyl phosphate site is built by Arg-55 and Thr-56. An L-aspartate-binding site is contributed by Lys-84. Positions 105, 133, and 136 each coordinate carbamoyl phosphate. Positions 166 and 227 each coordinate L-aspartate. Residues Leu-265 and Pro-266 each contribute to the carbamoyl phosphate site.

The protein belongs to the aspartate/ornithine carbamoyltransferase superfamily. ATCase family. As to quaternary structure, heterododecamer (2C3:3R2) of six catalytic PyrB chains organized as two trimers (C3), and six regulatory PyrI chains organized as three dimers (R2).

It catalyses the reaction carbamoyl phosphate + L-aspartate = N-carbamoyl-L-aspartate + phosphate + H(+). Its pathway is pyrimidine metabolism; UMP biosynthesis via de novo pathway; (S)-dihydroorotate from bicarbonate: step 2/3. Functionally, catalyzes the condensation of carbamoyl phosphate and aspartate to form carbamoyl aspartate and inorganic phosphate, the committed step in the de novo pyrimidine nucleotide biosynthesis pathway. The protein is Aspartate carbamoyltransferase catalytic subunit of Neisseria meningitidis serogroup A / serotype 4A (strain DSM 15465 / Z2491).